A 642-amino-acid chain; its full sequence is Medium-chain-fatty-acid--[acyl-carrier-protein] ligase TtuA (642 aa).

Belongs to the ATP-dependent AMP-binding enzyme family.

It carries out the reaction a medium-chain fatty acid + holo-[ACP] + ATP = a medium-chain fatty acyl-[ACP] + AMP + diphosphate. It catalyses the reaction a medium-chain fatty acid + ATP + H(+) = a medium-chain fatty acyl-AMP + diphosphate. The enzyme catalyses a medium-chain fatty acyl-AMP + holo-[ACP] = a medium-chain fatty acyl-[ACP] + AMP + H(+). The catalysed reaction is decanoate + holo-[ACP] + ATP = decanoyl-[ACP] + AMP + diphosphate. It carries out the reaction decanoate + ATP + H(+) = decanoyl-AMP + diphosphate. It catalyses the reaction decanoyl-AMP + holo-[ACP] = decanoyl-[ACP] + AMP + H(+). Its function is as follows. Ligase likely involved in the biosynthesis of a polyyne metabolite. Catalyzes the activation of decanoic acid, followed by the loading of the activated decanoic acid onto the acyl carrier protein TtuC. Decanoic acid is the preferred substrate, but it can also use 10-undecenoic acid and lauric acid. Nonanoic acid and 7-octenoic acid are only weakly activated. The chain is Medium-chain-fatty-acid--[acyl-carrier-protein] ligase TtuA from Teredinibacter turnerae (strain ATCC 39867 / T7901).